Consider the following 101-residue polypeptide: NAD(P)H-quinone oxidoreductase subunit 4L, chloroplastic (101 aa).

3 consecutive transmembrane segments (helical) span residues 2-22, 32-52, and 61-81; these read MLEH…YGLI, MCLE…SDLF, and IFSI…PAIV.

It belongs to the complex I subunit 4L family. In terms of assembly, NDH is composed of at least 16 different subunits, 5 of which are encoded in the nucleus.

The protein localises to the plastid. It is found in the chloroplast thylakoid membrane. The enzyme catalyses a plastoquinone + NADH + (n+1) H(+)(in) = a plastoquinol + NAD(+) + n H(+)(out). It carries out the reaction a plastoquinone + NADPH + (n+1) H(+)(in) = a plastoquinol + NADP(+) + n H(+)(out). NDH shuttles electrons from NAD(P)H:plastoquinone, via FMN and iron-sulfur (Fe-S) centers, to quinones in the photosynthetic chain and possibly in a chloroplast respiratory chain. The immediate electron acceptor for the enzyme in this species is believed to be plastoquinone. Couples the redox reaction to proton translocation, and thus conserves the redox energy in a proton gradient. This Ceratophyllum demersum (Rigid hornwort) protein is NAD(P)H-quinone oxidoreductase subunit 4L, chloroplastic.